The sequence spans 565 residues: UV-stimulated scaffold protein A homolog (565 aa).

The VHS-like stretch occupies residues 11–156; sequence RKNLNRILQE…VTLRKTKFVD (146 aa). A coiled-coil region spans residues 155–215; that stretch reads VDYENGEKKI…ELETTMEMLV (61 aa). The segment at 441 to 468 adopts a UVSSA-type zinc-finger fold; that stretch reads DRECLAKLPSGALCKRKDMFKCPLHGPL. Zn(2+)-binding residues include Cys-444, Cys-454, Cys-462, and His-465. Residues 480-510 are a coiled coil; it reads DEDRLKEIDRKERKRLKEAEEFSRKIVKEYE. Disordered regions lie at residues 510–530 and 542–565; these read ESKTKRKRKHEEETSVRSRLQ and VSADITSQQRSRLEKNFSHQFSHL.

It belongs to the UVSSA family.

The protein resides in the chromosome. Functionally, factor involved in transcription-coupled nucleotide excision repair (TC-NER) in response to UV damage. TC-NER allows RNA polymerase II-blocking lesions to be rapidly removed from the transcribed strand of active genes. In Caenorhabditis briggsae, this protein is UV-stimulated scaffold protein A homolog.